The following is a 152-amino-acid chain: Aspartate carbamoyltransferase regulatory chain (152 aa).

Zn(2+) contacts are provided by Cys-109, Cys-114, Cys-138, and Cys-141.

It belongs to the PyrI family. Contains catalytic and regulatory chains. Zn(2+) serves as cofactor.

Involved in allosteric regulation of aspartate carbamoyltransferase. The chain is Aspartate carbamoyltransferase regulatory chain from Proteus mirabilis (strain HI4320).